We begin with the raw amino-acid sequence, 61 residues long: Large ribosomal subunit protein uL29 (61 aa).

It belongs to the universal ribosomal protein uL29 family.

In Xanthomonas campestris pv. campestris (strain 8004), this protein is Large ribosomal subunit protein uL29.